Reading from the N-terminus, the 515-residue chain is 1-pyrroline-5-carboxylate dehydrogenase (515 aa).

Catalysis depends on residues E286 and C320.

The protein belongs to the aldehyde dehydrogenase family. RocA subfamily.

The catalysed reaction is L-glutamate 5-semialdehyde + NAD(+) + H2O = L-glutamate + NADH + 2 H(+). It participates in amino-acid degradation; L-proline degradation into L-glutamate; L-glutamate from L-proline: step 2/2. The sequence is that of 1-pyrroline-5-carboxylate dehydrogenase from Anoxybacillus flavithermus (strain DSM 21510 / WK1).